The primary structure comprises 451 residues: L-seryl-tRNA(Sec) selenium transferase (451 aa).

Lys286 carries the N6-(pyridoxal phosphate)lysine modification.

This sequence belongs to the SelA family. Pyridoxal 5'-phosphate serves as cofactor.

It is found in the cytoplasm. The catalysed reaction is L-seryl-tRNA(Sec) + selenophosphate + H(+) = L-selenocysteinyl-tRNA(Sec) + phosphate. It functions in the pathway aminoacyl-tRNA biosynthesis; selenocysteinyl-tRNA(Sec) biosynthesis; selenocysteinyl-tRNA(Sec) from L-seryl-tRNA(Sec) (bacterial route): step 1/1. In terms of biological role, converts seryl-tRNA(Sec) to selenocysteinyl-tRNA(Sec) required for selenoprotein biosynthesis. The chain is L-seryl-tRNA(Sec) selenium transferase from Aliarcobacter butzleri (strain RM4018) (Arcobacter butzleri).